Here is a 728-residue protein sequence, read N- to C-terminus: Catalase-peroxidase (728 aa).

Positions 91 to 218 (WHSAGTYRTA…LAAVQMGLIY (128 aa)) form a cross-link, tryptophyl-tyrosyl-methioninium (Trp-Tyr) (with M-244). Catalysis depends on His92, which acts as the Proton acceptor. The tryptophyl-tyrosyl-methioninium (Tyr-Met) (with W-91) cross-link spans 218-244 (YVNPEGPDGTPDPVAAAHDIRETFARM). His259 lines the heme b pocket.

It belongs to the peroxidase family. Peroxidase/catalase subfamily. Homodimer or homotetramer. The cofactor is heme b. Post-translationally, formation of the three residue Trp-Tyr-Met cross-link is important for the catalase, but not the peroxidase activity of the enzyme.

It catalyses the reaction H2O2 + AH2 = A + 2 H2O. The enzyme catalyses 2 H2O2 = O2 + 2 H2O. Bifunctional enzyme with both catalase and broad-spectrum peroxidase activity. The protein is Catalase-peroxidase of Burkholderia lata (strain ATCC 17760 / DSM 23089 / LMG 22485 / NCIMB 9086 / R18194 / 383).